The sequence spans 216 residues: Adenylate kinase (216 aa).

Position 10–15 (10–15) interacts with ATP; sequence GAGKGT. Residues 30 to 59 are NMP; the sequence is STGDMLREAVKADTPLGIEAKKVMDVGGLI. AMP contacts are provided by residues Thr-31, Arg-36, 57–59, 85–88, and Gln-92; these read GLI and GFPR. Positions 122–159 are LID; that stretch reads GRRAHLTSGRTYHIVYNPPKVEGIDDITGEELIQRTDD. Residues Arg-123 and 132–133 contribute to the ATP site; that span reads TY. The AMP site is built by Arg-156 and Arg-167. Position 202 (Gly-202) interacts with ATP.

Belongs to the adenylate kinase family. In terms of assembly, monomer.

The protein localises to the cytoplasm. It catalyses the reaction AMP + ATP = 2 ADP. It participates in purine metabolism; AMP biosynthesis via salvage pathway; AMP from ADP: step 1/1. Its function is as follows. Catalyzes the reversible transfer of the terminal phosphate group between ATP and AMP. Plays an important role in cellular energy homeostasis and in adenine nucleotide metabolism. The sequence is that of Adenylate kinase from Ruthia magnifica subsp. Calyptogena magnifica.